The chain runs to 340 residues: MQHVHPDDKTRSFYTGIGITLAIALVAGVLCKIPYLDIMGQLVLAIMIGMIWGHTIGLKNSHRSGVQFSSKKLLRAGIILLGLRLNLSAMYDAGLHAFLYAGLLLTVALVTVYSLARLFRVNKTLSILTACGTAICGAAAIVAIAPLVKAKESTTAVSVAVIAVLGTMFTLIYTMMYPFLPFTDYQYGIFAGGTLHEIAHAVAASTAGGEEAENIAIVVKLTRVALLVPVAILIGIYMKKREPQNNKQRFSLKTLPIPWFIFGFLAMSAVNTIGFLPESVVNLLISLAYLLLSMAMAGLGLNVEFQAFKKFGFHVFFAGLLGTLILIGCGFGLIYVMGLG.

9 consecutive transmembrane segments (helical) span residues 12–31 (SFYT…GVLC), 36–58 (LDIM…TIGL), 94–116 (GLHA…YSLA), 126–148 (SILT…APLV), 155–177 (TAVS…TMMY), 215–237 (IAIV…IGIY), 257–276 (IPWF…IGFL), 281–303 (VNLL…GLNV), and 315–337 (VFFA…IYVM).

This sequence belongs to the UPF0324 family.

It is found in the cell membrane. The protein is UPF0324 membrane protein OB3406 of Oceanobacillus iheyensis (strain DSM 14371 / CIP 107618 / JCM 11309 / KCTC 3954 / HTE831).